The sequence spans 318 residues: Sensor histidine kinase NatK (318 aa).

3 helical membrane passes run 4-24, 27-47, and 72-82; these read LFQCLYLILFSFICYQGAAAF, STAASWLAAALGAAAAGLYIW, and VGVVLIGTDIM. A Histidine kinase domain is found at 132-318; it reads RNHDTMKHIT…RLEIKIPFQK (187 aa). His134 carries the phosphohistidine; by autocatalysis modification.

The protein localises to the cell membrane. It catalyses the reaction ATP + protein L-histidine = ADP + protein N-phospho-L-histidine.. Member of the two-component regulatory system NatK/NatR that positively regulates the expression of the natAB operon. Potentially phosphorylates NatR. The polypeptide is Sensor histidine kinase NatK (Bacillus subtilis (strain 168)).